A 468-amino-acid chain; its full sequence is Probable xyloglucan galactosyltransferase GT13 (468 aa).

Residues 1–18 (MDKFNPKKEKTVKKRALK) are Cytoplasmic-facing. Residues 19–35 (VLTEISPTPLFSMLFLL) traverse the membrane as a helical; Signal-anchor for type II membrane protein segment. Residues 36-468 (HISQIATYLS…RVSLFKMTRI (433 aa)) are Lumenal-facing. N-linked (GlcNAc...) asparagine glycosylation is found at N53, N116, N153, N240, and N412.

It belongs to the glycosyltransferase 47 family. In terms of tissue distribution, expressed in roots, hypocotyls, cotyledons, leaves, stems, petals and carpels.

It localises to the golgi apparatus membrane. In terms of biological role, functions in xyloglucan synthesis by adding side chains to the xylosylated glucan backbone. Involved in the galactosylation of hemicellulose xyloglucan. This Arabidopsis thaliana (Mouse-ear cress) protein is Probable xyloglucan galactosyltransferase GT13.